A 99-amino-acid chain; its full sequence is MPKRKSPENTEGKDGSKVTKQEPTRRSARLSAKPAPPKPEPKPRKTSAKKEPGAKISRGAKGKKEEKQEAGKEGTAPSENGETKAEEAQKTESVDNEGE.

3 stretches are compositionally biased toward basic and acidic residues: residues 1–25 (MPKR…EPTR), 39–53 (PEPK…KEPG), and 62–72 (GKKEEKQEAGK). The interval 1-99 (MPKRKSPENT…KTESVDNEGE (99 aa)) is disordered. The residue at position 6 (Ser6) is a Phosphoserine. Phosphothreonine is present on Thr10. A phosphoserine mark is found at Ser78 and Ser93. Positions 81 to 93 (GETKAEEAQKTES) are enriched in basic and acidic residues.

Belongs to the HMGN family. In terms of assembly, interacts with the ligand binding domain of the thyroid receptor (TR) (in vitro). Requires the presence of thyroid hormone for its interaction. Interacts with transcriptional regulator SEHBP. Interacts with nucleosomes. As to expression, expressed in kidney, lung, pancreas, testis, skeletal muscle, heart, thyroid gland, pituitary gland, prostate and uterus. Low expression in liver, spleen, placenta and ovaries.

Its subcellular location is the nucleus. Binds to nucleosomes, regulating chromatin structure and consequently, chromatin-dependent processes such as transcription, DNA replication and DNA repair. Affects both insulin and glucagon levels and modulates the expression of pancreatic genes involved in insulin secretion. Regulates the expression of the glucose transporter SLC2A2 by binding specifically to its promoter region and recruiting PDX1 and additional transcription factors. Regulates the expression of SLC6A9, a glycine transporter which regulates the glycine concentration in synaptic junctions in the central nervous system, by binding to its transcription start site. May play a role in ocular development and astrocyte function. This is High mobility group nucleosome-binding domain-containing protein 3 (HMGN3) from Homo sapiens (Human).